A 387-amino-acid chain; its full sequence is Odorant receptor 19a (387 aa).

The Cytoplasmic portion of the chain corresponds to 1–40; it reads MDISKVDSTRALVNHWRIFRIMGIHPPGKRTFWGRHYTAY. The helical transmembrane segment at 41-61 threads the bilayer; that stretch reads SMVWNVTFHICIWVSFSVNLL. The Extracellular segment spans residues 62–71; that stretch reads QSNSLETFCE. The helical transmembrane segment at 72–92 threads the bilayer; it reads SLCVTMPHTLYMLKLINVRRM. Residues 93–127 lie on the Cytoplasmic side of the membrane; that stretch reads RGQMISSHWLLRLLDKRLGCDDERQIIMAGIERAE. Residues 128–148 form a helical membrane-spanning segment; the sequence is FIFRTIFRGLACTVVLGIIYI. Topologically, residues 149 to 171 are extracellular; it reads SASSEPTLMYPTWIPWNWRDSTS. A helical transmembrane segment spans residues 172–192; it reads AYLATAMLHTTALMANATLVL. Residues 193–254 are Cytoplasmic-facing; it reads NLSSYPGTYL…LRLFKSLERS (62 aa). Residues 255–275 form a helical membrane-spanning segment; that stretch reads LSMTCFLQFFSTACAQCTICY. Over 276 to 285 the chain is Extracellular; it reads FLLFGNVGIM. The helical transmembrane segment at 286 to 306 threads the bilayer; it reads RFMNMLFLLVILTTETLLLCY. Over 307–336 the chain is Cytoplasmic; sequence TAELPCKEGESLLTAVYSCNWLSQSVNFRR. Residues 337–357 form a helical membrane-spanning segment; sequence LLLLMLARCQIPMILVSGVIV. The Extracellular portion of the chain corresponds to 358 to 387; the sequence is PISMKTFTVMIKGAYTMLTLLNEIRKTSLE.

It belongs to the insect chemoreceptor superfamily. Heteromeric odorant receptor channel (TC 1.A.69) family. Or2a subfamily. Interacts with Orco. Complexes exist early in the endomembrane system in olfactory sensory neurons (OSNs), coupling these complexes to the conserved ciliary trafficking pathway. In terms of tissue distribution, expressed in ai2A olfactory sensory neurons in the antenna.

The protein localises to the cell membrane. In terms of biological role, odorant receptor which mediates acceptance or avoidance behavior, depending on its substrates. The odorant receptor repertoire encodes a large collection of odor stimuli that vary widely in identity, intensity, and duration. May form a complex with Orco to form odorant-sensing units, providing sensitive and prolonged odorant signaling and calcium permeability. Involved in the preference for citrus fruits for oviposition, especially through the response to valencene, the primary ligand of Or19a. Larvae growing on citrus fruits suffer a reduced risk of parasitism since endoparasitoid wasps that parasitize larvae are strongly repelled by the smell of citrus, as well as by valencene. The protein is Odorant receptor 19a (Or19a) of Drosophila melanogaster (Fruit fly).